A 723-amino-acid chain; its full sequence is Fatty acid oxidation complex subunit alpha (723 aa).

The segment at 1–189 is enoyl-CoA hydratase/isomerase; sequence MIYQADTLQV…KIGLLDAVVE (189 aa). Residue aspartate 296 coordinates substrate. The 3-hydroxyacyl-CoA dehydrogenase stretch occupies residues 311–723; it reads SKDTERAAVL…FYGAQQQGSI (413 aa). NAD(+)-binding positions include methionine 325, aspartate 344, 401–403, lysine 408, and serine 430; that span reads VVE. Residue histidine 451 is the For 3-hydroxyacyl-CoA dehydrogenase activity of the active site. Asparagine 454 is a binding site for NAD(+). 2 residues coordinate substrate: asparagine 501 and tyrosine 661.

It in the N-terminal section; belongs to the enoyl-CoA hydratase/isomerase family. The protein in the C-terminal section; belongs to the 3-hydroxyacyl-CoA dehydrogenase family. In terms of assembly, heterotetramer of two alpha chains (FadB) and two beta chains (FadA).

It carries out the reaction a (3S)-3-hydroxyacyl-CoA + NAD(+) = a 3-oxoacyl-CoA + NADH + H(+). The enzyme catalyses a (3S)-3-hydroxyacyl-CoA = a (2E)-enoyl-CoA + H2O. It catalyses the reaction a 4-saturated-(3S)-3-hydroxyacyl-CoA = a (3E)-enoyl-CoA + H2O. The catalysed reaction is (3S)-3-hydroxybutanoyl-CoA = (3R)-3-hydroxybutanoyl-CoA. It carries out the reaction a (3Z)-enoyl-CoA = a 4-saturated (2E)-enoyl-CoA. The enzyme catalyses a (3E)-enoyl-CoA = a 4-saturated (2E)-enoyl-CoA. Its pathway is lipid metabolism; fatty acid beta-oxidation. Involved in the aerobic and anaerobic degradation of long-chain fatty acids via beta-oxidation cycle. Catalyzes the formation of 3-oxoacyl-CoA from enoyl-CoA via L-3-hydroxyacyl-CoA. It can also use D-3-hydroxyacyl-CoA and cis-3-enoyl-CoA as substrate. The protein is Fatty acid oxidation complex subunit alpha of Vibrio parahaemolyticus serotype O3:K6 (strain RIMD 2210633).